A 282-amino-acid chain; its full sequence is ATP synthase gamma chain (282 aa).

Belongs to the ATPase gamma chain family. F-type ATPases have 2 components, CF(1) - the catalytic core - and CF(0) - the membrane proton channel. CF(1) has five subunits: alpha(3), beta(3), gamma(1), delta(1), epsilon(1). CF(0) has three main subunits: a, b and c.

Its subcellular location is the cell membrane. Functionally, produces ATP from ADP in the presence of a proton gradient across the membrane. The gamma chain is believed to be important in regulating ATPase activity and the flow of protons through the CF(0) complex. The protein is ATP synthase gamma chain of Clostridium botulinum (strain Kyoto / Type A2).